A 283-amino-acid polypeptide reads, in one-letter code: Thymidylate synthase (283 aa).

R22 provides a ligand contact to dUMP. C160 acts as the Nucleophile in catalysis. Residues 180 to 183 (RSCD), N191, and 221 to 223 (HIY) contribute to the dUMP site. Residue D183 participates in (6R)-5,10-methylene-5,6,7,8-tetrahydrofolate binding. A (6R)-5,10-methylene-5,6,7,8-tetrahydrofolate-binding site is contributed by S282.

This sequence belongs to the thymidylate synthase family. Bacterial-type ThyA subfamily. Homodimer.

It localises to the cytoplasm. The catalysed reaction is dUMP + (6R)-5,10-methylene-5,6,7,8-tetrahydrofolate = 7,8-dihydrofolate + dTMP. The protein operates within pyrimidine metabolism; dTTP biosynthesis. In terms of biological role, catalyzes the reductive methylation of 2'-deoxyuridine-5'-monophosphate (dUMP) to 2'-deoxythymidine-5'-monophosphate (dTMP) while utilizing 5,10-methylenetetrahydrofolate (mTHF) as the methyl donor and reductant in the reaction, yielding dihydrofolate (DHF) as a by-product. This enzymatic reaction provides an intracellular de novo source of dTMP, an essential precursor for DNA biosynthesis. This Photobacterium profundum (strain SS9) protein is Thymidylate synthase.